We begin with the raw amino-acid sequence, 67 residues long: Probable archaeal histone 3 (67 aa).

2 interaction with DNA regions span residues 20–22 and 54–57; these read RVS and KTVK.

The protein belongs to the archaeal histone HMF family. In terms of assembly, homodimer or heterodimer with another histone. Dimers then assemble into higher oligomers, with the DNA wrapped around the protein core.

It is found in the cytoplasm. Its subcellular location is the chromosome. Binds and compact DNA (95 to 150 base pairs) to form nucleosome-like structures that contain positive DNA supercoils. Increases the resistance of DNA to thermal denaturation (in vitro). The polypeptide is Probable archaeal histone 3 (Methanocaldococcus jannaschii (strain ATCC 43067 / DSM 2661 / JAL-1 / JCM 10045 / NBRC 100440) (Methanococcus jannaschii)).